We begin with the raw amino-acid sequence, 772 residues long: Gelsolin (772 aa).

The first 17 residues, 1–17 (LGALVVALCALSPPARA), serve as a signal peptide directing secretion. Positions 18-33 (ATASRGAPQARAPQGR) are excised as a propeptide. Residues 19–38 (TASRGAPQARAPQGRVSPMR) are disordered. Residues 41-166 (TMVVEHPEFL…YKKGGVASGF (126 aa)) form an actin-severing region. Residues 66–148 (FDLVPVPPNL…VQGFESATFL (83 aa)) form a Gelsolin-like 1 repeat. Phosphotyrosine is present on Tyr76. Gly82, Asp83, Glu114, Asp126, Gly131, and Ala133 together coordinate Ca(2+). The actin-actin interfilament contact point stretch occupies residues 113-116 (DESG). 152 to 159 (KSGLKYKK) lines the a 1,2-diacyl-sn-glycero-3-phospho-(1D-myo-inositol-4,5-bisphosphate) pocket. Val162 lines the Ca(2+) pocket. Residue 178–186 (RLFQVKGRR) participates in a 1,2-diacyl-sn-glycero-3-phospho-(1D-myo-inositol-4,5-bisphosphate) binding. The stretch at 188 to 260 (VRATEVPVSW…SEEDAEPAGM (73 aa)) is one Gelsolin-like 2 repeat. Ca(2+) is bound by residues Gly203 and Asp204. Cys205 and Cys218 are oxidised to a cystine. 5 residues coordinate Ca(2+): Glu226, Asp276, Glu319, Asp320, and Glu344. One copy of the Gelsolin-like 3 repeat lies at 307–379 (DENPFAQGAL…LPEGGETPLF (73 aa)). Tyr399 and Tyr455 each carry phosphotyrosine. Residues 424-772 (AAQHGMDDDG…LDRAIAELAA (349 aa)) are actin-binding, Ca-sensitive. A Gelsolin-like 4 repeat occupies 445 to 526 (SNKVPVDPAT…VQGKEPAHLM (82 aa)). 7 residues coordinate Ca(2+): Gly461, Asp462, Glu492, Asp504, Gly509, Pro511, and Thr541. A Gelsolin-like 5 repeat occupies 567-632 (RAVEVIPKAG…AEGSEPDSFW (66 aa)). The residue at position 574 (Lys574) is an N6-acetyllysine. Asn581 and Asp582 together coordinate Ca(2+). Tyr593 carries the post-translational modification Phosphotyrosine. Position 604 (Glu604) interacts with Ca(2+). Position 641 is a phosphotyrosine (Tyr641). A Gelsolin-like 6 repeat occupies 671–746 (VEEVPGELMQ…VKQGFEPPSF (76 aa)). Ca(2+) is bound by residues Asp686, Asp687, and Glu709. The residue at position 732 (Thr732) is a Phosphothreonine.

This sequence belongs to the villin/gelsolin family. Binds to actin and to fibronectin. Identified in a complex composed of ACTA1, COBL, GSN and TMSB4X. Interacts with the inactive form of EIF2AK2/PKR. Interacts with FLII. Phosphorylated on tyrosine residues in vitro.

The protein localises to the cytoplasm. Its subcellular location is the cytoskeleton. It localises to the secreted. In terms of biological role, calcium-regulated, actin-modulating protein that binds to the plus (or barbed) ends of actin monomers or filaments, preventing monomer exchange (end-blocking or capping). It can promote the assembly of monomers into filaments (nucleation) as well as sever filaments already formed. Plays a role in ciliogenesis. This Sus scrofa (Pig) protein is Gelsolin (GSN).